Reading from the N-terminus, the 761-residue chain is Xaa-Pro dipeptidyl-peptidase (761 aa).

Catalysis depends on charge relay system residues Ser349, Asp469, and His499.

It belongs to the peptidase S15 family. Homodimer.

Its subcellular location is the cytoplasm. It carries out the reaction Hydrolyzes Xaa-Pro-|- bonds to release unblocked, N-terminal dipeptides from substrates including Ala-Pro-|-p-nitroanilide and (sequentially) Tyr-Pro-|-Phe-Pro-|-Gly-Pro-|-Ile.. Functionally, removes N-terminal dipeptides sequentially from polypeptides having unsubstituted N-termini provided that the penultimate residue is proline. This is Xaa-Pro dipeptidyl-peptidase from Streptococcus equi subsp. zooepidemicus (strain H70).